A 427-amino-acid polypeptide reads, in one-letter code: Putative dipeptidase MCYG_02918 (427 aa).

Positions 1-29 (MAPERRSRLSDAGILVSLLALTSLVPVQA) are cleaved as a signal peptide. The Zn(2+) site is built by histidine 55, aspartate 57, and glutamate 167. A disulfide bond links cysteine 106 and cysteine 196. Residue histidine 194 participates in substrate binding. Zn(2+) is bound by residues histidine 238 and histidine 259. Residues arginine 270 and aspartate 330 each contribute to the substrate site. N-linked (GlcNAc...) asparagine glycosylation occurs at asparagine 402.

Belongs to the metallo-dependent hydrolases superfamily. Peptidase M19 family. It depends on Zn(2+) as a cofactor.

It catalyses the reaction an L-aminoacyl-L-amino acid + H2O = 2 an L-alpha-amino acid. Its function is as follows. Hydrolyzes a wide range of dipeptides. The chain is Putative dipeptidase MCYG_02918 from Arthroderma otae (strain ATCC MYA-4605 / CBS 113480) (Microsporum canis).